Here is a 427-residue protein sequence, read N- to C-terminus: MLTLLEKFIQKIEEYNLIEENDRILVAVSGGVDSSVLLNLLARVQEYFKFSIFCATVDHGIRKESKEEVKFVYNMAQSLNVECFIKEFDVPLYAKENKLSIEEAARKLRYKFLNEIAKKINANKVATAHNLNDLAETVLFRLARGTGPFGIYGMKPRNGNIIRPLLFFERKEIEQFATENKIPFVVDKTNFDTKYTRNFIRHKIIPIFKEINPLFEQAVLRFVENVWELDSFVKDKLNVETFEFEGRIFFKVPKDEYILVEFIRRKTMEHFGRAPDKEKLDRLKKNLYKTSFKISFWGDYGVEISYGYGVLGKFIEHMNYECSMDCQNNVNFGPFVVKFGNNGIIFKKMNLTIRNYRFGDKTKGGKKLKEIFVEKKVPSFIRRIIPIFVDEDGYVFYIPNVFLDRDYLSKEENGISIKVEMKGGFWF.

29-34 (SGGVDS) lines the ATP pocket.

This sequence belongs to the tRNA(Ile)-lysidine synthase family.

The protein localises to the cytoplasm. The catalysed reaction is cytidine(34) in tRNA(Ile2) + L-lysine + ATP = lysidine(34) in tRNA(Ile2) + AMP + diphosphate + H(+). In terms of biological role, ligates lysine onto the cytidine present at position 34 of the AUA codon-specific tRNA(Ile) that contains the anticodon CAU, in an ATP-dependent manner. Cytidine is converted to lysidine, thus changing the amino acid specificity of the tRNA from methionine to isoleucine. The protein is tRNA(Ile)-lysidine synthase of Thermosipho africanus (strain TCF52B).